The primary structure comprises 154 residues: Bacterial ferritin (154 aa).

The Ferritin-like diiron domain maps to 1–145 (MQGNQAVVDY…QQLRLIELIG (145 aa)). Fe cation-binding residues include E18, E51, H54, E93, E127, and H130.

The protein belongs to the bacterioferritin family. In terms of assembly, forms a bacterioferritin (BFR) complex with BfrB. Heterooligomer of 24 subunits, arranged as 12 dimers, that are packed together to form an approximately spherical molecule with a central cavity, in which large amounts of iron can be deposited.

The protein resides in the cytoplasm. The catalysed reaction is 4 Fe(2+) + O2 + 4 H(+) = 4 Fe(3+) + 2 H2O. It catalyses the reaction Fe(2+)(in) = Fe(2+)(out). Its function is as follows. Iron-storage protein. Its ferroxidase center binds Fe(2+), oxidizes it using dioxygen to Fe(3+), and participates in the subsequent Fe(3+) oxide mineral core formation within the central cavity of the BFR protein shell. Plays a role in protection against iron-mediated oxidative stress. The chain is Bacterial ferritin from Neisseria gonorrhoeae.